The primary structure comprises 439 residues: Alpha-1,3-mannosyl-glycoprotein 4-beta-N-acetylglucosaminyltransferase-like protein MGAT4E (439 aa).

The protein operates within protein modification; protein glycosylation. In terms of biological role, glycosyltransferase-like protein that may participate in the transfer of N-acetylglucosamine (GlcNAc) to the core mannose residues of N-linked glycans. The polypeptide is Alpha-1,3-mannosyl-glycoprotein 4-beta-N-acetylglucosaminyltransferase-like protein MGAT4E (Mus musculus (Mouse)).